Consider the following 855-residue polypeptide: Discoidin domain-containing receptor 2 (855 aa).

Positions 1 to 21 (MILIPRMLLVLFLLLPILSSA) are cleaved as a signal peptide. Over 22-399 (KAQVNPAICR…MLKVDDSNTR (378 aa)) the chain is Extracellular. The F5/8 type C domain maps to 30 to 185 (CRYPLGMSGG…VCMRVELYGC (156 aa)). 2 disulfides stabilise this stretch: cysteine 30–cysteine 185 and cysteine 73–cysteine 177. Asparagine 121, asparagine 213, asparagine 261, asparagine 280, and asparagine 372 each carry an N-linked (GlcNAc...) asparagine glycan. The helical transmembrane segment at 400–421 (ILIGCLVAIIFILLAIIVIILW) threads the bilayer. Over 422-855 (RQFWQKMLEK…HLLLLQQGDE (434 aa)) the chain is Cytoplasmic. The interval 452 to 471 (SMFNNNRSSSPSEQGSNSTY) is disordered. Tyrosine 471 is modified (phosphotyrosine; by SRC and autocatalysis). In terms of domain architecture, Protein kinase spans 563–849 (LTFKEKLGEG…PSFQEIHLLL (287 aa)). Residues 569 to 577 (LGEGQFGEV) and lysine 608 each bind ATP. Aspartate 710 serves as the catalytic Proton acceptor. Phosphotyrosine; by SRC and autocatalysis is present on residues tyrosine 736, tyrosine 740, and tyrosine 741.

It belongs to the protein kinase superfamily. Tyr protein kinase family. Insulin receptor subfamily. Binds hydroxyproline-rich sequence motifs in fibrillar, glycosylated collagen, such as the GQOGVMGFO motif, where O stands for hydroxyproline. Interacts with SRC. Interacts (tyrosine phosphorylated) with SHC1. Post-translationally, N-glycosylated. In terms of processing, tyrosine phosphorylated in response to collagen binding. Phosphorylated by SRC; this is required for activation and subsequent autophosphorylation on additional tyrosine residues. In terms of tissue distribution, detected in osteocytes, osteoblastic cells in subchondral bone, bone lining cells, tibia and cartilage (at protein level). Detected at high levels in heart and lung, and at low levels in brain, placenta, liver, skeletal muscle, pancreas, and kidney.

The protein localises to the cell membrane. It catalyses the reaction L-tyrosyl-[protein] + ATP = O-phospho-L-tyrosyl-[protein] + ADP + H(+). Present in an inactive state in the absence of collagen binding and phosphorylation by SRC. Tyrosine phosphorylation enhances the affinity for ATP and the catalytic activity. In terms of biological role, tyrosine kinase involved in the regulation of tissues remodeling. It functions as a cell surface receptor for fibrillar collagen and regulates cell differentiation, remodeling of the extracellular matrix, cell migration and cell proliferation. Required for normal bone development. Regulates osteoblast differentiation and chondrocyte maturation via a signaling pathway that involves MAP kinases and leads to the activation of the transcription factor RUNX2. Regulates remodeling of the extracellular matrix by up-regulation of the collagenases MMP1, MMP2 and MMP13, and thereby facilitates cell migration and tumor cell invasion. Promotes fibroblast migration and proliferation, and thereby contributes to cutaneous wound healing. The chain is Discoidin domain-containing receptor 2 (DDR2) from Homo sapiens (Human).